A 67-amino-acid polypeptide reads, in one-letter code: Medusin-PT (67 aa).

An N-terminal signal peptide occupies residues 1 to 22; the sequence is MAFLKKSLFLVFFLGFVSLSIC. The propeptide occupies 23 to 48; it reads EEEKRETDEKENEQEDDREERSEEKR. The disordered stretch occupies residues 25 to 46; sequence EKRETDEKENEQEDDREERSEE. The span at 31 to 40 shows a compositional bias: acidic residues; sequence EKENEQEDDR. Leucine 66 bears the Leucine amide mark.

Belongs to the frog skin active peptide (FSAP) family. Medusin subfamily. Post-translationally, in the synthetic mutant medusin-PT1a [T58K], the Leu-50 has been modified in a D-amino acid. In medusin-PT1a, there is an increase in antimicrobial activity, and an increase in hemolytic activity. It is more potent against S.aureus and gains activity against MRSA, E.faecalis, E.coli, P.aeruginosa and C.albicans. There is an important increase in both biofilm inhibition and biofilm eradication. In terms of tissue distribution, expressed by the skin glands.

It is found in the secreted. Its subcellular location is the target cell membrane. Its function is as follows. Antimicrobial peptide with activity against Gram-positive bacteria S.epidermidis ATCC 12228 (MIC=50 uM) and S.aureus (MIC=64 ug/ml and MBC=128 ug/ml). Not active against some Gram-positive bacteria (methicillin-resistant S.aureus (MRSA), E.faecalis), Gram-negative bacterium E.coli ATCC 25922 and fungus C.albicans at concentrations up to 100 uM. Can only slightly inhibit the formation of biofilm by S.aureus (minimal biofilm inhibitionconcentration MBIC=512 ug/ml, minimal biofilm eradication concentration MBEC&gt;512 ug/ml). Has an anti-inflammatory effect, since it inhibits the production of the pro-inflammatory cytokines TNF-alpha and IL-1beta. Has high activity of stimulation of insulin release, which may protect the species from being eaten by predators by causing fatal hypoglycemia. Is not cytotoxic to cancer line cells. Shows very low hemolysis on horse erythrocytes and moderate hemolysis on mouse erythrocytes. The polypeptide is Medusin-PT (Phyllomedusa tarsius (Brownbelly leaf frog)).